Consider the following 308-residue polypeptide: Acetyl-coenzyme A carboxylase carboxyl transferase subunit beta (308 aa).

Residues 25–294 (VWTKCTSCEQ…PLVVSVNDSP (270 aa)) form the CoA carboxyltransferase N-terminal domain. Zn(2+) contacts are provided by C29, C32, C48, and C51. Residues 29 to 51 (CTSCEQVLYHAELERNLEVCPKC) form a C4-type zinc finger.

Belongs to the AccD/PCCB family. In terms of assembly, acetyl-CoA carboxylase is a heterohexamer composed of biotin carboxyl carrier protein (AccB), biotin carboxylase (AccC) and two subunits each of ACCase subunit alpha (AccA) and ACCase subunit beta (AccD). It depends on Zn(2+) as a cofactor.

It localises to the cytoplasm. It catalyses the reaction N(6)-carboxybiotinyl-L-lysyl-[protein] + acetyl-CoA = N(6)-biotinyl-L-lysyl-[protein] + malonyl-CoA. The protein operates within lipid metabolism; malonyl-CoA biosynthesis; malonyl-CoA from acetyl-CoA: step 1/1. Component of the acetyl coenzyme A carboxylase (ACC) complex. Biotin carboxylase (BC) catalyzes the carboxylation of biotin on its carrier protein (BCCP) and then the CO(2) group is transferred by the transcarboxylase to acetyl-CoA to form malonyl-CoA. This chain is Acetyl-coenzyme A carboxylase carboxyl transferase subunit beta, found in Vibrio vulnificus (strain CMCP6).